Reading from the N-terminus, the 157-residue chain is 3-dehydroquinate dehydratase (157 aa).

The Proton acceptor role is filled by tyrosine 29. Substrate is bound by residues asparagine 80, histidine 86, and aspartate 93. The active-site Proton donor is the histidine 107. Substrate-binding positions include isoleucine 108–serine 109 and arginine 118.

This sequence belongs to the type-II 3-dehydroquinase family. As to quaternary structure, homododecamer.

The enzyme catalyses 3-dehydroquinate = 3-dehydroshikimate + H2O. The protein operates within metabolic intermediate biosynthesis; chorismate biosynthesis; chorismate from D-erythrose 4-phosphate and phosphoenolpyruvate: step 3/7. Its function is as follows. Catalyzes a trans-dehydration via an enolate intermediate. The chain is 3-dehydroquinate dehydratase (aroQ) from Streptomyces coelicolor (strain ATCC BAA-471 / A3(2) / M145).